The chain runs to 406 residues: MTEEHRLISAESVTEGHPDKVCDQISDAILDDLLAQDSSSHVAVETSAATGVFLVFGEVTSEGYCDVQSKVRETLRNIGYTSSEVGLDADSCGVVVAITEQSAEINQGVARLTGDQETAASREERYEAQGAGDQGVMFGYATDETPTLMPLPIYLAHRLAFHLTEVRKSGEVPHLRPDGKTQVTIEYDDDDKPVRLDTVLISTQHDPEVTQDWLAVELKKHVIDPVLDEVLGSKVPHDNYRQLVNPTGSFILGGPAADAGLTGRKIIVDTYGGAAHHGGGAFSGKDPSKVDRSAAYATRWVAKNIVAAGLAHKVEIQIAYAIGVADPVSVNVETFGTEQGVTRGQIAAAVRKVFDLRPAAIIDELDLKRPIYLKTAAYGHFGRTDVEFPWEKTDKVEELKAAIAAE.

H17 serves as a coordination point for ATP. Residue D19 coordinates Mg(2+). E45 provides a ligand contact to K(+). L-methionine is bound by residues E58 and Q101. The interval 101–111 (QSAEINQGVAR) is flexible loop. ATP is bound by residues 178-180 (DGK), D258, 264-265 (RK), A281, and K285. D258 serves as a coordination point for L-methionine. Residue K289 coordinates L-methionine.

Belongs to the AdoMet synthase family. As to quaternary structure, homotetramer; dimer of dimers. It depends on Mg(2+) as a cofactor. Requires K(+) as cofactor.

The protein localises to the cytoplasm. It carries out the reaction L-methionine + ATP + H2O = S-adenosyl-L-methionine + phosphate + diphosphate. The protein operates within amino-acid biosynthesis; S-adenosyl-L-methionine biosynthesis; S-adenosyl-L-methionine from L-methionine: step 1/1. Catalyzes the formation of S-adenosylmethionine (AdoMet) from methionine and ATP. The overall synthetic reaction is composed of two sequential steps, AdoMet formation and the subsequent tripolyphosphate hydrolysis which occurs prior to release of AdoMet from the enzyme. This is S-adenosylmethionine synthase from Bifidobacterium longum (strain NCC 2705).